Here is a 515-residue protein sequence, read N- to C-terminus: tRNA pseudouridine synthase Pus10 (515 aa).

Positions 21 and 24 each coordinate Zn(2+). The stretch at 42-85 (KEVTYELQKYLSHGDPAEENDTPPSKKAKIEEDTSSNEHLGNCE) forms a coiled coil. The tract at residues 55-82 (GDPAEENDTPPSKKAKIEEDTSSNEHLG) is disordered. 2 residues coordinate Zn(2+): C96 and C99. The interval 291–304 (TPWIIDGERKIESS) is RNA binding forefinger loop. The active-site Nucleophile is D331. Positions 428 to 443 (QKTPLRVLHRRPLASR) are RNA binding thumb loop.

This sequence belongs to the pseudouridine synthase Pus10 family.

The protein resides in the nucleus. The protein localises to the cytoplasm. It localises to the mitochondrion. It catalyses the reaction uridine(55) in tRNA = pseudouridine(55) in tRNA. The enzyme catalyses uridine(54) in tRNA = pseudouridine(54) in tRNA. Protein with different functions depending on its subcellular location: involved in miRNA processing in the nucleus and acts as a tRNA pseudouridylate synthase in the cytoplasm. In the cytoplasm, acts as a pseudouridylate synthase by catalyzing synthesis of pseudouridine(54) and pseudouridine(55) from uracil-54 and uracil-55, respectively, in the psi GC loop of a subset of tRNAs. tRNA pseudouridylate synthase activity is enhanced by the presence of 1-methyladenosine at position 53-61 of tRNAs. Does not show tRNA pseudouridylate synthase activity in the nucleus. In the nucleus, promotes primary microRNAs (pri-miRNAs) processing independently of its RNA pseudouridylate synthase activity. Binds pri-miRNAs. The polypeptide is tRNA pseudouridine synthase Pus10 (Xenopus laevis (African clawed frog)).